The sequence spans 81 residues: Cytotoxin 4N (81 aa).

Residues 1 to 21 (MKTLLLTLVVVTIVCLDLGYT) form the signal peptide. 4 cysteine pairs are disulfide-bonded: Cys-24/Cys-42, Cys-35/Cys-59, Cys-63/Cys-74, and Cys-75/Cys-80.

The protein belongs to the three-finger toxin family. Short-chain subfamily. Type IA cytotoxin sub-subfamily. In terms of assembly, monomer in solution; Homodimer and oligomer in the presence of negatively charged lipids forming a pore with a size ranging between 20 and 30 Angstroms. Expressed by the venom gland.

The protein localises to the secreted. The protein resides in the target cell membrane. Functionally, shows cytolytic activity on many different cells by forming pore in lipid membranes. In vivo, increases heart rate or kills the animal by cardiac arrest. In addition, it binds to heparin with high affinity, interacts with Kv channel-interacting protein 1 (KCNIP1) in a calcium-independent manner, and binds to integrin alpha-V/beta-3 (ITGAV/ITGB3) with moderate affinity. The polypeptide is Cytotoxin 4N (Naja atra (Chinese cobra)).